Here is a 39-residue protein sequence, read N- to C-terminus: ORF8a protein (39 aa).

Positions 1–15 (MKLLIVLTCISLCSC) are cleaved as a signal peptide. The region spanning 16–39 (ICTVVQRCASNKPHVLEDPCKVQH) is the SARS ORF8 Ig-like domain.

The sequence is that of ORF8a protein from Homo sapiens (Human).